The sequence spans 226 residues: RING-H2 finger protein ATL75 (226 aa).

Residues 60–80 (LMLLSVLICGIICCLGLHYII) traverse the membrane as a helical segment. The segment at 136-178 (CVICLSDFVSGEQIRMLPKCHHGFHVRCIDKWLQQHLTCPKCR) adopts an RING-type; atypical zinc-finger fold.

Belongs to the RING-type zinc finger family. ATL subfamily.

It localises to the membrane. The enzyme catalyses S-ubiquitinyl-[E2 ubiquitin-conjugating enzyme]-L-cysteine + [acceptor protein]-L-lysine = [E2 ubiquitin-conjugating enzyme]-L-cysteine + N(6)-ubiquitinyl-[acceptor protein]-L-lysine.. The protein operates within protein modification; protein ubiquitination. The chain is RING-H2 finger protein ATL75 (ATL75) from Arabidopsis thaliana (Mouse-ear cress).